Here is a 237-residue protein sequence, read N- to C-terminus: UPF0280 protein Mbur_0309 (237 aa).

Belongs to the UPF0280 family.

This chain is UPF0280 protein Mbur_0309, found in Methanococcoides burtonii (strain DSM 6242 / NBRC 107633 / OCM 468 / ACE-M).